The primary structure comprises 511 residues: Activin receptor type-2B (511 aa).

A signal peptide spans 1–20 (MGASVALTFLLLLATFRAGS). Over 21–136 (GHDEVETREC…KPQPSASVLN (116 aa)) the chain is Extracellular. Cys-30 and Cys-61 are joined by a disulfide. 2 N-linked (GlcNAc...) asparagine glycosylation sites follow: Asn-43 and Asn-67. 3 disulfide bridges follow: Cys-86–Cys-105, Cys-92–Cys-104, and Cys-106–Cys-111. Residues 137–157 (ILIYSLLPIVGLSMAILLAFW) form a helical membrane-spanning segment. At 158-511 (MYRHRKPSYG…VDLPPKESSI (354 aa)) the chain is on the cytoplasmic side. The Protein kinase domain maps to 189–477 (LQLLDIKARG…LSAGCVEERI (289 aa)). Residues 195-203 (KARGRFGCV) and Lys-216 contribute to the ATP site. Asp-320 acts as the Proton acceptor in catalysis.

Belongs to the protein kinase superfamily. TKL Ser/Thr protein kinase family. TGFB receptor subfamily.

Its subcellular location is the membrane. It catalyses the reaction L-threonyl-[receptor-protein] + ATP = O-phospho-L-threonyl-[receptor-protein] + ADP + H(+). The enzyme catalyses L-seryl-[receptor-protein] + ATP = O-phospho-L-seryl-[receptor-protein] + ADP + H(+). Receptor for activin A, activin B and inhibin A. Involved in transmembrane signaling. The chain is Activin receptor type-2B (acvr2b) from Xenopus laevis (African clawed frog).